Consider the following 292-residue polypeptide: Phosphoribulokinase 2 (292 aa).

An ATP-binding site is contributed by 12–20 (GSSGAGTST).

Belongs to the phosphoribulokinase family.

It catalyses the reaction D-ribulose 5-phosphate + ATP = D-ribulose 1,5-bisphosphate + ADP + H(+). It functions in the pathway carbohydrate biosynthesis; Calvin cycle. The polypeptide is Phosphoribulokinase 2 (prkB) (Cereibacter sphaeroides (Rhodobacter sphaeroides)).